The primary structure comprises 274 residues: 2,3,4,5-tetrahydropyridine-2,6-dicarboxylate N-succinyltransferase (274 aa).

This sequence belongs to the transferase hexapeptide repeat family.

It is found in the cytoplasm. The catalysed reaction is (S)-2,3,4,5-tetrahydrodipicolinate + succinyl-CoA + H2O = (S)-2-succinylamino-6-oxoheptanedioate + CoA. The protein operates within amino-acid biosynthesis; L-lysine biosynthesis via DAP pathway; LL-2,6-diaminopimelate from (S)-tetrahydrodipicolinate (succinylase route): step 1/3. This chain is 2,3,4,5-tetrahydropyridine-2,6-dicarboxylate N-succinyltransferase, found in Leptothrix cholodnii (strain ATCC 51168 / LMG 8142 / SP-6) (Leptothrix discophora (strain SP-6)).